A 294-amino-acid polypeptide reads, in one-letter code: Endolytic peptidoglycan transglycosylase RlpA (294 aa).

The first 23 residues, 1–23 (MKQKIFQILTALCCIFYVMSAQA), serve as a signal peptide directing secretion. One can recognise an SPOR domain in the interval 216 to 291 (EKYTTVYKIR…NYSKPLIVYT (76 aa)).

It belongs to the RlpA family.

Lytic transglycosylase with a strong preference for naked glycan strands that lack stem peptides. This is Endolytic peptidoglycan transglycosylase RlpA from Pasteurella multocida (strain Pm70).